A 744-amino-acid polypeptide reads, in one-letter code: Potassium-transporting ATPase ATP-binding subunit (744 aa).

A run of 4 helical transmembrane segments spans residues 80–100, 108–128, 265–285, and 310–330; these read PVMF…VMAL, AGFI…ANVA, LALT…TVTL, and VLVA…LSAI. Asp363 (4-aspartylphosphate intermediate) is an active-site residue. ATP contacts are provided by residues Asp400, Glu404, 435–442, and Lys457; that span reads FSAQTRMS. Residues Asp580 and Asp584 each contribute to the Mg(2+) site. The next 3 membrane-spanning stretches (helical) occupy residues 650–670, 678–698, and 724–744; these read FAII…LNVM, AVMS…PLAL, and LLLP…MGWV.

Belongs to the cation transport ATPase (P-type) (TC 3.A.3) family. Type IA subfamily. As to quaternary structure, the system is composed of three essential subunits: KdpA, KdpB and KdpC.

It localises to the cell inner membrane. The enzyme catalyses K(+)(out) + ATP + H2O = K(+)(in) + ADP + phosphate + H(+). Part of the high-affinity ATP-driven potassium transport (or Kdp) system, which catalyzes the hydrolysis of ATP coupled with the electrogenic transport of potassium into the cytoplasm. This subunit is responsible for energy coupling to the transport system and for the release of the potassium ions to the cytoplasm. This chain is Potassium-transporting ATPase ATP-binding subunit, found in Ralstonia nicotianae (strain ATCC BAA-1114 / GMI1000) (Ralstonia solanacearum).